A 154-amino-acid polypeptide reads, in one-letter code: Deoxyuridine 5'-triphosphate nucleotidohydrolase (154 aa).

Substrate is bound by residues 72 to 74 (RSG), Asn85, 89 to 91 (LID), and Met99.

Belongs to the dUTPase family. It depends on Mg(2+) as a cofactor.

The catalysed reaction is dUTP + H2O = dUMP + diphosphate + H(+). It functions in the pathway pyrimidine metabolism; dUMP biosynthesis; dUMP from dCTP (dUTP route): step 2/2. Its function is as follows. This enzyme is involved in nucleotide metabolism: it produces dUMP, the immediate precursor of thymidine nucleotides and it decreases the intracellular concentration of dUTP so that uracil cannot be incorporated into DNA. The chain is Deoxyuridine 5'-triphosphate nucleotidohydrolase from Psychrobacter arcticus (strain DSM 17307 / VKM B-2377 / 273-4).